Consider the following 241-residue polypeptide: NH(3)-dependent NAD(+) synthetase (241 aa).

29–36 (GISGGIDS) lines the ATP pocket. Mg(2+) is bound at residue Asp35. Arg110 is a binding site for deamido-NAD(+). Glu135 serves as a coordination point for Mg(2+). Deamido-NAD(+) is bound by residues Lys143 and Asp150. ATP contacts are provided by Lys159 and Ser181. 226–227 (HK) lines the deamido-NAD(+) pocket.

It belongs to the NAD synthetase family. Homodimer.

It catalyses the reaction deamido-NAD(+) + NH4(+) + ATP = AMP + diphosphate + NAD(+) + H(+). Its pathway is cofactor biosynthesis; NAD(+) biosynthesis; NAD(+) from deamido-NAD(+) (ammonia route): step 1/1. In terms of biological role, catalyzes the ATP-dependent amidation of deamido-NAD to form NAD. Uses ammonia as a nitrogen source. In Finegoldia magna (strain ATCC 29328 / DSM 20472 / WAL 2508) (Peptostreptococcus magnus), this protein is NH(3)-dependent NAD(+) synthetase.